A 214-amino-acid chain; its full sequence is MIEPLHTAPPLLAAHALAFSRNEEPVFGPLDFHVDAGEALLVQGDNGAGKTTLLRVLAGLLHVEHGQIQIDGKTAKRGDRSRFMAYLGHLPGLKADLSTLENLHFLCGLHGRRAKQMPGSALAIVGLAGYEDALVRQLSAGQRKRLALARLWLSPAPLWLLDEPYANLDLDGITLVNRMISAHLRGGGAALVTTHGAYAAPPVRTRMLTLEAAA.

Residues 12–214 form the ABC transporter domain; sequence LAAHALAFSR…TRMLTLEAAA (203 aa). 44-51 serves as a coordination point for ATP; the sequence is GDNGAGKT.

Belongs to the ABC transporter superfamily. CcmA exporter (TC 3.A.1.107) family. As to quaternary structure, the complex is composed of two ATP-binding proteins (CcmA) and two transmembrane proteins (CcmB).

Its subcellular location is the cell inner membrane. It catalyses the reaction heme b(in) + ATP + H2O = heme b(out) + ADP + phosphate + H(+). Functionally, part of the ABC transporter complex CcmAB involved in the biogenesis of c-type cytochromes; once thought to export heme, this seems not to be the case, but its exact role is uncertain. Responsible for energy coupling to the transport system. The sequence is that of Cytochrome c biogenesis ATP-binding export protein CcmA from Xanthomonas oryzae pv. oryzae (strain MAFF 311018).